Here is a 1023-residue protein sequence, read N- to C-terminus: 2-oxoglutarate dehydrogenase complex component E1 (1023 aa).

Residues 1–40 (MFHLRTCAAKLRPLTASQTVKTFSQNRPAAARTFQQIRCY) constitute a mitochondrion transit peptide. At Lys-74 the chain carries N6-succinyllysine. The residue at position 100 (Ser-100) is a Phosphoserine. Ca(2+) contacts are provided by His-143, Asp-156, and Asp-158. Position 312 (Arg-312) interacts with thiamine diphosphate. Lys-401 carries the N6-acetyllysine modification. Positions 411, 444, and 446 each coordinate thiamine diphosphate. Mg(2+)-binding residues include Asp-411, Asn-444, and Ile-446. Lys-534 participates in a covalent cross-link: Glycyl lysine isopeptide (Lys-Gly) (interchain with G-Cter in ubiquitin). Lys-564 carries the post-translational modification N6-succinyllysine. A thiamine diphosphate-binding site is contributed by Gln-676. Lys-970 carries the N6-acetyllysine modification.

This sequence belongs to the alpha-ketoglutarate dehydrogenase family. In terms of assembly, homodimer. The 2-oxoglutarate dehydrogenase complex is composed of OGDH (2-oxoglutarate dehydrogenase; E1), DLST (dihydrolipoamide succinyltransferase; E2), DLD (dihydrolipoamide dehydrogenase; E3) and the assembly factor KGD4. It contains multiple copies of the three enzymatic components (E1, E2 and E3). In the nucleus, the 2-oxoglutarate dehydrogenase complex associates with KAT2A. Interacts with ABHD11; this interaction maintains the functional lipoylation of the 2-oxoglutarate dehydrogenase complex. Thiamine diphosphate is required as a cofactor. Mg(2+) serves as cofactor.

The protein localises to the mitochondrion. It is found in the nucleus. It catalyses the reaction N(6)-[(R)-lipoyl]-L-lysyl-[protein] + 2-oxoglutarate + H(+) = N(6)-[(R)-S(8)-succinyldihydrolipoyl]-L-lysyl-[protein] + CO2. With respect to regulation, calcium ions and ADP stimulate, whereas ATP and NADH reduce catalytic activity. Its function is as follows. 2-oxoglutarate dehydrogenase (E1o) component of the 2-oxoglutarate dehydrogenase complex (OGDHC). Participates in the first step, rate limiting for the overall conversion of 2-oxoglutarate to succinyl-CoA and CO(2) catalyzed by the whole OGDHC. Catalyzes the irreversible decarboxylation of 2-oxoglutarate (alpha-ketoglutarate) via the thiamine diphosphate (ThDP) cofactor and subsequent transfer of the decarboxylated acyl intermediate on an oxidized dihydrolipoyl group that is covalently amidated to the E2 enzyme (dihydrolipoyllysine-residue succinyltransferase or DLST). Plays a key role in the Krebs (citric acid) cycle, which is a common pathway for oxidation of fuel molecules, including carbohydrates, fatty acids, and amino acids. Can catalyze the decarboxylation of 2-oxoadipate in vitro, but at a much lower rate than 2-oxoglutarate. Mainly active in the mitochondrion. A fraction of the 2-oxoglutarate dehydrogenase complex also localizes in the nucleus and is required for lysine succinylation of histones: associates with KAT2A on chromatin and provides succinyl-CoA to histone succinyltransferase KAT2A. The sequence is that of 2-oxoglutarate dehydrogenase complex component E1 from Pongo abelii (Sumatran orangutan).